A 180-amino-acid polypeptide reads, in one-letter code: ATP synthase subunit delta (180 aa).

Belongs to the ATPase delta chain family. F-type ATPases have 2 components, F(1) - the catalytic core - and F(0) - the membrane proton channel. F(1) has five subunits: alpha(3), beta(3), gamma(1), delta(1), epsilon(1). CF(0) has four main subunits: a(1), b(1), b'(1) and c(10-14). The alpha and beta chains form an alternating ring which encloses part of the gamma chain. F(1) is attached to F(0) by a central stalk formed by the gamma and epsilon chains, while a peripheral stalk is formed by the delta, b and b' chains.

It localises to the cellular thylakoid membrane. Functionally, f(1)F(0) ATP synthase produces ATP from ADP in the presence of a proton or sodium gradient. F-type ATPases consist of two structural domains, F(1) containing the extramembraneous catalytic core and F(0) containing the membrane proton channel, linked together by a central stalk and a peripheral stalk. During catalysis, ATP synthesis in the catalytic domain of F(1) is coupled via a rotary mechanism of the central stalk subunits to proton translocation. This protein is part of the stalk that links CF(0) to CF(1). It either transmits conformational changes from CF(0) to CF(1) or is implicated in proton conduction. This Prochlorococcus marinus subsp. pastoris (strain CCMP1986 / NIES-2087 / MED4) protein is ATP synthase subunit delta.